We begin with the raw amino-acid sequence, 171 residues long: Large ribosomal subunit protein uL10 (171 aa).

Belongs to the universal ribosomal protein uL10 family. Part of the ribosomal stalk of the 50S ribosomal subunit. The N-terminus interacts with L11 and the large rRNA to form the base of the stalk. The C-terminus forms an elongated spine to which L12 dimers bind in a sequential fashion forming a multimeric L10(L12)X complex.

Functionally, forms part of the ribosomal stalk, playing a central role in the interaction of the ribosome with GTP-bound translation factors. This is Large ribosomal subunit protein uL10 from Nitrosomonas eutropha (strain DSM 101675 / C91 / Nm57).